The primary structure comprises 68 residues: Conotoxin TsMMSK-021 (68 aa).

A signal peptide spans 1 to 20 (MMSKLGVLLTICLLLFPLTA). Residues 21-50 (VPLDGDQHADRPADRMQDISSEQHPLFDPV) constitute a propeptide that is removed on maturation. 3 disulfide bridges follow: C53–C66, C54–C62, and C58–C65. Residue P64 is modified to 4-hydroxyproline.

It belongs to the conotoxin M superfamily. In terms of tissue distribution, expressed by the venom duct.

It is found in the secreted. This is Conotoxin TsMMSK-021 from Conus tessulatus (Tessellate cone).